A 327-amino-acid polypeptide reads, in one-letter code: Ribonucleoside-diphosphate reductase small chain (327 aa).

The Fe cation site is built by D70, E101, and H104. Y108 is an active-site residue. Residues E164, E198, and H201 each contribute to the Fe cation site.

This sequence belongs to the ribonucleoside diphosphate reductase small chain family. In terms of assembly, heterotetramer composed of a homodimer of the large subunit (R1) and a homodimer of the small subunit (R2). Larger multisubunit protein complex are also active, composed of (R1)n(R2)n. Fe cation serves as cofactor.

The catalysed reaction is a 2'-deoxyribonucleoside 5'-diphosphate + [thioredoxin]-disulfide + H2O = a ribonucleoside 5'-diphosphate + [thioredoxin]-dithiol. Functionally, ribonucleoside-diphosphate reductase holoenzyme provides the precursors necessary for viral DNA synthesis. Allows virus growth in non-dividing cells. Catalyzes the biosynthesis of deoxyribonucleotides from the corresponding ribonucleotides. The polypeptide is Ribonucleoside-diphosphate reductase small chain (Ornithodoros (relapsing fever ticks)).